The sequence spans 233 residues: Gamma-glutamyl-hercynylcysteine sulfoxide hydrolase (233 aa).

C2 acts as the Nucleophile in catalysis. A Glutamine amidotransferase type-2 domain is found at 2 to 233 (CRHLGWLGAQ…TALDRAKGPR (232 aa)).

It carries out the reaction gamma-L-glutamyl-hercynylcysteine S-oxide + H2O = S-(hercyn-2-yl)-L-cysteine S-oxide + L-glutamate. It functions in the pathway amino-acid biosynthesis; ergothioneine biosynthesis. In terms of biological role, catalyzes the hydrolysis of the gamma-glutamyl amide bond of hercynyl-gamma-L-glutamyl-L-cysteine sulfoxide to produce hercynylcysteine sulfoxide, a step in the biosynthesis pathway of ergothioneine. ERG is one of the major redox buffers which protects bacteria against redox stressors and antibiotics; loss of ERG or mycothiol (MSH, the other major redox buffer in this bacteria) leads to respiratory alterations and bioenergetic deficiencies that negatively impact virulence. This chain is Gamma-glutamyl-hercynylcysteine sulfoxide hydrolase, found in Mycobacterium tuberculosis (strain CDC 1551 / Oshkosh).